A 169-amino-acid chain; its full sequence is Thaumatin-like pathogenesis-related protein 2 (169 aa).

An N-terminal signal peptide occupies residues 1–21 (MATSSAVLFFLLAVFAAGASA).

Belongs to the thaumatin family.

Functionally, associated with resistance against stem rust fungi. This Avena sativa (Oat) protein is Thaumatin-like pathogenesis-related protein 2 (RASTL-2).